The following is an 817-amino-acid chain: Ribonuclease R 1 (817 aa).

The RNB domain occupies arginine 259–glutamate 584. One can recognise an S1 motif domain in the interval glycine 637–leucine 717. Residues alanine 728–glycine 817 are disordered. The span at lysine 729–serine 742 shows a compositional bias: basic residues. Composition is skewed to basic and acidic residues over residues arginine 767–lysine 777 and lysine 795–arginine 810.

Belongs to the RNR ribonuclease family. RNase R subfamily.

The protein localises to the cytoplasm. It catalyses the reaction Exonucleolytic cleavage in the 3'- to 5'-direction to yield nucleoside 5'-phosphates.. Functionally, 3'-5' exoribonuclease that releases 5'-nucleoside monophosphates and is involved in maturation of structured RNAs. In Lactococcus lactis subsp. lactis (strain IL1403) (Streptococcus lactis), this protein is Ribonuclease R 1 (rnr1).